The primary structure comprises 91 residues: Small ribosomal subunit protein bS20 (91 aa).

A compositionally biased stretch (basic and acidic residues) spans 1–18; sequence MPLHKSAEKRLRQSERRN. A disordered region spans residues 1-25; the sequence is MPLHKSAEKRLRQSERRNARNRARK.

It belongs to the bacterial ribosomal protein bS20 family.

In terms of biological role, binds directly to 16S ribosomal RNA. The chain is Small ribosomal subunit protein bS20 from Chlorobium luteolum (strain DSM 273 / BCRC 81028 / 2530) (Pelodictyon luteolum).